The primary structure comprises 214 residues: Adenylate kinase (214 aa).

10–15 (GAGKGT) contacts ATP. Residues 30–59 (STGDMLRAAIKAGSELGQKAKILMDMGQLV) form an NMP region. AMP contacts are provided by residues Thr31, Arg36, 57 to 59 (QLV), 85 to 88 (GFPR), and Gln92. Residues 122-159 (GRRVHPASGRTYHIVYNPPKVEDKDDITGEDLILRADD) form an LID region. ATP-binding positions include Arg123 and 132-133 (TY). AMP is bound by residues Arg156 and Arg167. Residue Gln200 coordinates ATP.

It belongs to the adenylate kinase family. As to quaternary structure, monomer.

Its subcellular location is the cytoplasm. The enzyme catalyses AMP + ATP = 2 ADP. It participates in purine metabolism; AMP biosynthesis via salvage pathway; AMP from ADP: step 1/1. Functionally, catalyzes the reversible transfer of the terminal phosphate group between ATP and AMP. Plays an important role in cellular energy homeostasis and in adenine nucleotide metabolism. The chain is Adenylate kinase from Histophilus somni (strain 129Pt) (Haemophilus somnus).